The chain runs to 356 residues: 5-formaminoimidazole-4-carboxamide-1-(beta)-D-ribofuranosyl 5'-monophosphate synthetase (356 aa).

5-amino-1-(5-phospho-beta-D-ribosyl)imidazole-4-carboxamide contacts are provided by H27 and S94. The ATP-grasp domain occupies 116-333; that stretch reads RCLAWESDRE…YSDLIEKGLS (218 aa). ATP-binding positions include 145-196 and E226; that span reads AELI…TRYY. N255 serves as a coordination point for 5-amino-1-(5-phospho-beta-D-ribosyl)imidazole-4-carboxamide. The Mg(2+) site is built by E293 and E306.

The protein belongs to the phosphohexose mutase family. The cofactor is Mg(2+). Mn(2+) is required as a cofactor.

The catalysed reaction is 5-amino-1-(5-phospho-beta-D-ribosyl)imidazole-4-carboxamide + formate + ATP = 5-formamido-1-(5-phospho-D-ribosyl)imidazole-4-carboxamide + ADP + phosphate. The protein operates within purine metabolism; IMP biosynthesis via de novo pathway; 5-formamido-1-(5-phospho-D-ribosyl)imidazole-4-carboxamide from 5-amino-1-(5-phospho-D-ribosyl)imidazole-4-carboxamide (formate route): step 1/1. In terms of biological role, catalyzes the ATP- and formate-dependent formylation of 5-aminoimidazole-4-carboxamide-1-beta-d-ribofuranosyl 5'-monophosphate (AICAR) to 5-formaminoimidazole-4-carboxamide-1-beta-d-ribofuranosyl 5'-monophosphate (FAICAR) in the absence of folates. In Methanothrix thermoacetophila (strain DSM 6194 / JCM 14653 / NBRC 101360 / PT) (Methanosaeta thermophila), this protein is 5-formaminoimidazole-4-carboxamide-1-(beta)-D-ribofuranosyl 5'-monophosphate synthetase.